The chain runs to 862 residues: DNA mismatch repair protein MutS (862 aa).

Residue 613-620 (GPNMAGKS) coordinates ATP.

The protein belongs to the DNA mismatch repair MutS family.

Functionally, this protein is involved in the repair of mismatches in DNA. It is possible that it carries out the mismatch recognition step. This protein has a weak ATPase activity. This is DNA mismatch repair protein MutS from Desulfitobacterium hafniense (strain Y51).